The chain runs to 134 residues: Large-conductance mechanosensitive channel (134 aa).

A run of 2 helical transmembrane segments spans residues 16-36 and 81-101; these read VIDLAVAVVIGAAFGKIVTAL and GDFLNTILQFIIIAFAIFIIV.

It belongs to the MscL family. Homopentamer.

Its subcellular location is the cell inner membrane. Channel that opens in response to stretch forces in the membrane lipid bilayer. May participate in the regulation of osmotic pressure changes within the cell. The sequence is that of Large-conductance mechanosensitive channel from Xylella fastidiosa (strain M12).